Reading from the N-terminus, the 654-residue chain is Macrolide export ATP-binding/permease protein MacB (654 aa).

In terms of domain architecture, ABC transporter spans 6–244 (LKVEDLTRRF…EQAAKTPSAS (239 aa)). Position 42-49 (42-49 (GASGSGKS)) interacts with ATP. A run of 4 helical transmembrane segments spans residues 280-300 (FLTM…VALG), 529-549 (LLIS…VMNI), 584-604 (LVCL…GFAF), and 619-639 (SIIW…FLPA).

It belongs to the ABC transporter superfamily. Macrolide exporter (TC 3.A.1.122) family. In terms of assembly, homodimer. Part of the tripartite efflux system MacAB-TolC, which is composed of an inner membrane transporter, MacB, a periplasmic membrane fusion protein, MacA, and an outer membrane component, TolC. The complex forms a large protein conduit and can translocate molecules across both the inner and outer membranes. Interacts with MacA.

The protein resides in the cell inner membrane. Functionally, part of the tripartite efflux system MacAB-TolC. MacB is a non-canonical ABC transporter that contains transmembrane domains (TMD), which form a pore in the inner membrane, and an ATP-binding domain (NBD), which is responsible for energy generation. Confers resistance against macrolides. In Vibrio parahaemolyticus serotype O3:K6 (strain RIMD 2210633), this protein is Macrolide export ATP-binding/permease protein MacB.